A 221-amino-acid polypeptide reads, in one-letter code: Immunoregulatory peptides (221 aa).

A signal peptide spans 1–19 (MNYLCLVVTLVAVAGAISG). Positions 20–45 (EKFSDDNTGYQSTPSLRIRTTPGRRR) are excised as a propeptide. A disordered region spans residues 21–155 (KFSDDNTGYQ…PRTIGPPYTR (135 aa)). Residues 25–34 (DNTGYQSTPS) are compositionally biased toward polar residues. Residues 48-69 (PRTIGPPYTRRTLRTTTDYSTT) show a composition bias toward low complexity. Polar residues-rich tracts occupy residues 70 to 85 (VENG…STEK) and 123 to 133 (NGTTPAANSTE). The propeptide occupies 191–221 (EISWTFGPLYTWRTTKGYGTTLETTNATSTS).

In terms of tissue distribution, salivary glands.

The protein localises to the secreted. Its function is as follows. Suppress host inflammatory response. Exerts significant anti-inflammatory functions, either by directly inhibiting host secretion of inflammatory factors such as tumor necrosis factor-alpha (TNF), monocyte chemotactic protein-1 (CCL2), and interferon-gamma (IFNG) or by indirectly increasing the secretion of immunosuppressant cytokine of interleukin-10 (IL10). Also potently scavenges free radical in vitro in a rapid manner. All tested concentrations of this peptide have little effect on the cell viability. In vivo, inhibits hind paw adjuvant-induced inflammation in mouse in a dose-dependent manner. Functionally, suppress host inflammatory response. Exerts significant anti-inflammatory functions, either by directly inhibiting host secretion of inflammatory factors such as tumor necrosis factor-alpha (TNF), monocyte chemotactic protein-1 (CCL2), and interferon-gamma (IFNG) or by indirectly increasing the secretion of immunosuppressant cytokine of interleukin-10 (IL10). Also potently scavenges free radical in vitro in a rapid manner. Low concentrations of this peptide have little effect on the cell viability, whereas high concentrations increase the cell viability by 10-20%. In vivo, inhibits hind paw adjuvant-induced inflammation in mouse in a dose-dependent manner. In terms of biological role, not studied but probably similar to Hyalomin-B1. This chain is Immunoregulatory peptides, found in Hyalomma asiaticum asiaticum (Tick).